Reading from the N-terminus, the 1028-residue chain is Contactin-6 (1028 aa).

A signal peptide spans 1-19; sequence MRLLWKLVILLPLINSSAG. Ig-like C2-type domains are found at residues 26–117, 122–208, 227–308, 318–402, 408–495, and 499–587; these read PIFT…AKLQ, EDFE…RSVQ, PKIE…RNLA, PEWE…AELR, PDFS…GSLI, and RTVI…ESLS. 6 disulfides stabilise this stretch: C50–C100, C144–C196, C249–C297, C339–C386, C431–C479, and C521–C577. N-linked (GlcNAc...) asparagine glycosylation is found at N65 and N193. 3 N-linked (GlcNAc...) asparagine glycosylation sites follow: N368, N377, and N468. Fibronectin type-III domains lie at 600-698, 703-800, 805-901, and 902-996; these read PPED…TKAS, APVN…SGED, APRG…TKKS, and PPSQ…KMSS. 4 N-linked (GlcNAc...) asparagine glycosylation sites follow: N659, N765, N860, and N865. Y882 carries the post-translational modification Phosphotyrosine. Over residues 887 to 902 the composition is skewed to polar residues; that stretch reads TGPSSPPVNVTTKKSP. The tract at residues 887–908 is disordered; the sequence is TGPSSPPVNVTTKKSPPSQPPA. N-linked (GlcNAc...) asparagine glycans are attached at residues N895, N931, N956, and N957. A lipid anchor (GPI-anchor amidated serine) is attached at S999. A propeptide spans 1000 to 1028 (removed in mature form); the sequence is RGIQFLEPSTHFLSIVIVIFHCFAIQPLI.

This sequence belongs to the immunoglobulin superfamily. Contactin family. Interacts with PTPRG. In terms of tissue distribution, expressed in nervous system. Highly expressed in cerebellum. Expressed at intermediate level in thalamus, subthalamic nucleus. Weakly expressed in corpus callosum, caudate nucleus and spinal cord.

The protein localises to the cell membrane. Its function is as follows. Contactins mediate cell surface interactions during nervous system development. Participates in oligodendrocytes generation by acting as a ligand of NOTCH1. Its association with NOTCH1 promotes NOTCH1 activation through the released notch intracellular domain (NICD) and subsequent translocation to the nucleus. Involved in motor coordination. This is Contactin-6 (CNTN6) from Homo sapiens (Human).